The following is a 387-amino-acid chain: Sulfopyruvate decarboxylase (387 aa).

This sequence belongs to the TPP enzyme family. Thiamine diphosphate serves as cofactor.

The catalysed reaction is 3-sulfopyruvate + H(+) = sulfoacetaldehyde + CO2. The protein operates within cofactor biosynthesis; coenzyme M biosynthesis. Involved in the biosynthesis of the coenzyme M (2-mercaptoethanesulfonic acid). Catalyzes the decarboxylation of sulfopyruvate to sulfoacetaldehyde. Is not able to decarboxylate the analogous compounds 2-oxoglutarate or 2-oxosuberate. In Methanosarcina acetivorans (strain ATCC 35395 / DSM 2834 / JCM 12185 / C2A), this protein is Sulfopyruvate decarboxylase.